The chain runs to 391 residues: GDP-mannose transporter (391 aa).

A compositionally biased stretch (basic and acidic residues) spans 1–11; it reads MDDKKNEDVEM. A disordered region spans residues 1-28; the sequence is MDDKKNEDVEMRNFNGRSSPSQRDPFIS. Over 1–44 the chain is Cytoplasmic; the sequence is MDDKKNEDVEMRNFNGRSSPSQRDPFISKPGAAKRGGSSFDLSN. A helical transmembrane segment spans residues 45–65; the sequence is VTNSPGISILAYCLASISMTV. Topologically, residues 66–75 are lumenal; the sequence is TNKYCVSGSN. A helical transmembrane segment spans residues 76 to 96; the sequence is WNLNFFYLAIQSVVCIIAIII. Residues 97-115 are Cytoplasmic-facing; that stretch reads CKQAGLITNLAPFDTKKAK. Residues 116-138 form a helical membrane-spanning segment; sequence TWFPISLLLVGMIYTSTKALQFL. At 139-141 the chain is on the lumenal side; sequence SVP. The chain crosses the membrane as a helical span at residues 142 to 164; sequence VYTIFKNLTIIVIAYGEVLWFGG. Over 165-170 the chain is Cytoplasmic; that stretch reads SVTPSA. The chain crosses the membrane as a helical span at residues 171-193; it reads LFSFGLMVLSSVVAAWADIQHAL. Topologically, residues 194-209 are lumenal; it reads YGGGATQTKEAADALS. A helical transmembrane segment spans residues 210-230; the sequence is TLNAGYAWMGMNVFCTAAYVL. Topologically, residues 231–245 are cytoplasmic; the sequence is SMRKVIKKMNFKDWD. A helical transmembrane segment spans residues 246–266; sequence TMFYNNLLTIPVLFVCSFVFE. Asn267 and Asn272 each carry an N-linked (GlcNAc...) asparagine glycan. Residues 267–284 are Lumenal-facing; the sequence is NWSSENLTKNFPLETRNN. Residues 285 to 305 traverse the membrane as a helical segment; it reads LILGMIYSGLATIFISYCSAW. The Cytoplasmic portion of the chain corresponds to 306–313; it reads CIRVTSST. Residues 314–336 form a helical membrane-spanning segment; sequence TYSMVGALNKLPIAVSGLVFFAA. Topologically, residues 337–339 are lumenal; the sequence is PVT. Residues 340-359 traverse the membrane as a helical segment; sequence FGSVSAIFIGFVSGIVYAWA. The Cytoplasmic segment spans residues 360–391; that stretch reads KVRQNQSKGSVLPTTQPVMSASSQSNRDAAKA. Residues 369–391 form a disordered region; the sequence is SVLPTTQPVMSASSQSNRDAAKA.

Belongs to the TPT transporter family. SLC35D subfamily. Homooligomer.

The protein resides in the golgi apparatus membrane. It is found in the cytoplasmic vesicle membrane. The protein localises to the endoplasmic reticulum membrane. Functionally, involved in the import of GDP-mannose from the cytoplasm into the Golgi lumen. The sequence is that of GDP-mannose transporter (vrg4) from Sclerotinia sclerotiorum (strain ATCC 18683 / 1980 / Ss-1) (White mold).